Here is a 208-residue protein sequence, read N- to C-terminus: Putative archaetidylserine decarboxylase proenzyme (208 aa).

S172 functions as the Schiff-base intermediate with substrate; via pyruvic acid in the catalytic mechanism. At S172 the chain carries Pyruvic acid (Ser); by autocatalysis.

It belongs to the phosphatidylserine decarboxylase family. PSD-A subfamily. As to quaternary structure, heterodimer of a large membrane-associated beta subunit and a small pyruvoyl-containing alpha subunit. The cofactor is pyruvate. Is synthesized initially as an inactive proenzyme. Formation of the active enzyme involves a self-maturation process in which the active site pyruvoyl group is generated from an internal serine residue via an autocatalytic post-translational modification. Two non-identical subunits are generated from the proenzyme in this reaction, and the pyruvate is formed at the N-terminus of the alpha chain, which is derived from the carboxyl end of the proenzyme. The post-translation cleavage follows an unusual pathway, termed non-hydrolytic serinolysis, in which the side chain hydroxyl group of the serine supplies its oxygen atom to form the C-terminus of the beta chain, while the remainder of the serine residue undergoes an oxidative deamination to produce ammonia and the pyruvoyl prosthetic group on the alpha chain.

Its subcellular location is the cell membrane. It catalyses the reaction archaetidylserine + H(+) = archaetidylethanolamine + CO2. In terms of biological role, catalyzes the formation of archaetidylethanolamine (PtdEtn) from archaetidylserine (PtdSer). The protein is Putative archaetidylserine decarboxylase proenzyme of Methanosarcina acetivorans (strain ATCC 35395 / DSM 2834 / JCM 12185 / C2A).